Consider the following 396-residue polypeptide: Elongation factor Tu (396 aa).

The region spanning 10–206 is the tr-type G domain; the sequence is KPHVNIGTIG…AVDESVPDPV (197 aa). A G1 region spans residues 19 to 26; the sequence is GHVDHGKT. 19–26 contacts GTP; that stretch reads GHVDHGKT. A Mg(2+)-binding site is contributed by threonine 26. Residues 62 to 66 are G2; it reads GITIN. Positions 83-86 are G3; the sequence is DAPG. Residues 83 to 87 and 138 to 141 each bind GTP; these read DAPGH and NKSD. The tract at residues 138–141 is G4; sequence NKSD. The segment at 176 to 178 is G5; it reads SGL.

The protein belongs to the TRAFAC class translation factor GTPase superfamily. Classic translation factor GTPase family. EF-Tu/EF-1A subfamily. In terms of assembly, monomer.

The protein localises to the cytoplasm. It carries out the reaction GTP + H2O = GDP + phosphate + H(+). In terms of biological role, GTP hydrolase that promotes the GTP-dependent binding of aminoacyl-tRNA to the A-site of ribosomes during protein biosynthesis. The polypeptide is Elongation factor Tu (Pseudarthrobacter chlorophenolicus (strain ATCC 700700 / DSM 12829 / CIP 107037 / JCM 12360 / KCTC 9906 / NCIMB 13794 / A6) (Arthrobacter chlorophenolicus)).